The chain runs to 523 residues: DNA-directed primase/polymerase protein (523 aa).

Substrate-binding positions include Arg-78, Asp-117–Glu-119, and Lys-168–His-172. Residues Asp-117 and Glu-119 each contribute to the Mn(2+) site. A disordered region spans residues Leu-203–Glu-230. Residues Arg-258–Arg-261 and Lys-267 each bind substrate. Residues Cys-390, His-397, Cys-417, and Cys-422 each coordinate Zn(2+). The Zinc knuckle motif signature appears at Cys-390–Arg-423. Positions Ala-467–Ser-477 are enriched in low complexity. Positions Ala-467–Glu-523 are disordered. 2 stretches are compositionally biased toward acidic residues: residues Glu-478 to Asp-488 and Glu-498 to Asp-512.

It belongs to the eukaryotic-type primase small subunit family. Mn(2+) is required as a cofactor.

The protein resides in the nucleus. It localises to the mitochondrion matrix. The protein localises to the chromosome. It catalyses the reaction ssDNA + n NTP = ssDNA/pppN(pN)n-1 hybrid + (n-1) diphosphate.. It carries out the reaction DNA(n) + a 2'-deoxyribonucleoside 5'-triphosphate = DNA(n+1) + diphosphate. Its function is as follows. DNA primase and DNA polymerase required to tolerate replication-stalling lesions by bypassing them. Required to facilitate mitochondrial and nuclear replication fork progression by initiating de novo DNA synthesis using dNTPs and acting as an error-prone DNA polymerase able to bypass certain DNA lesions. Shows a high capacity to tolerate DNA damage lesions such as 8oxoG and abasic sites in DNA. Provides different translesion synthesis alternatives when DNA replication is stalled: able to synthesize DNA primers downstream of lesions, such as UV lesions, R-loops and G-quadruplexes, to allow DNA replication to continue. Can also realign primers ahead of 'unreadable lesions' such as abasic sites and 6-4 photoproduct (6-4 pyrimidine-pyrimidinone), thereby skipping the lesion. Repriming avoids fork degradation while leading to accumulation of internal ssDNA gaps behind the forks. Also able to incorporate nucleotides opposite DNA lesions such as 8oxoG, like a regular translesion synthesis DNA polymerase. Also required for reinitiating stalled forks after ultraviolet (UV) damage during nuclear DNA replication. Required for mitochondrial DNA (mtDNA) synthesis and replication, by reinitiating synthesis after UV damage or in the presence of chain-terminating nucleotides. In addition to its role in DNA damage response, also required to maintain efficient nuclear and mitochondrial DNA replication in unperturbed cells. This Danio rerio (Zebrafish) protein is DNA-directed primase/polymerase protein.